The sequence spans 72 residues: Translation initiation factor IF-1 (72 aa).

Residues 1 to 72 enclose the S1-like domain; that stretch reads MAKSDVIEVE…SKGRITYRFK (72 aa).

The protein belongs to the IF-1 family. Component of the 30S ribosomal translation pre-initiation complex which assembles on the 30S ribosome in the order IF-2 and IF-3, IF-1 and N-formylmethionyl-tRNA(fMet); mRNA recruitment can occur at any time during PIC assembly.

The protein localises to the cytoplasm. Functionally, one of the essential components for the initiation of protein synthesis. Stabilizes the binding of IF-2 and IF-3 on the 30S subunit to which N-formylmethionyl-tRNA(fMet) subsequently binds. Helps modulate mRNA selection, yielding the 30S pre-initiation complex (PIC). Upon addition of the 50S ribosomal subunit IF-1, IF-2 and IF-3 are released leaving the mature 70S translation initiation complex. In Levilactobacillus brevis (strain ATCC 367 / BCRC 12310 / CIP 105137 / JCM 1170 / LMG 11437 / NCIMB 947 / NCTC 947) (Lactobacillus brevis), this protein is Translation initiation factor IF-1.